We begin with the raw amino-acid sequence, 392 residues long: MSSLLLDNIGELVTNTAAGEGPLGIHRDAAVLVEDGVVAWVGPNGSAPAADRRIDAESAAVLPGFVDSHAHLVFAGDRAVEFAARMAGQPYTGGGIRTTVGATRAATDDELRATAHRLHAEALRQGTTTIEIKSGYGLTVVDEARSLRIAAEVSSETTFLGAHLVPAEYADRPDDYVDLVCGPMLAAAAPYARWVDVFCERGAFDADHTRAILTRGQAAGLGTRLHANQLGPGPGVQLGVELGVASVDHCTHLTDADVDALAGADGATVATLLPGAEFSTRSPYPDARRLLDAGVTVALATDCNPGSSYTSSVPFCIALAVREMRMSPSEAVWAATAGGAAALRRTDVGRLAPGSQADLMILDAPSHLHLAYRPGIPLIRQVLHNGVPQCRP.

Residues H69 and H71 each coordinate Fe(3+). The Zn(2+) site is built by H69 and H71. 3 residues coordinate 4-imidazolone-5-propanoate: R78, Y136, and H163. N-formimidoyl-L-glutamate is bound at residue Y136. Position 226 (H226) interacts with Fe(3+). H226 is a Zn(2+) binding site. Residue Q229 participates in 4-imidazolone-5-propanoate binding. Residue D302 coordinates Fe(3+). Residue D302 participates in Zn(2+) binding. Residues N304 and G306 each contribute to the N-formimidoyl-L-glutamate site. S307 provides a ligand contact to 4-imidazolone-5-propanoate.

It belongs to the metallo-dependent hydrolases superfamily. HutI family. Requires Zn(2+) as cofactor. It depends on Fe(3+) as a cofactor.

It is found in the cytoplasm. The enzyme catalyses 4-imidazolone-5-propanoate + H2O = N-formimidoyl-L-glutamate. Its pathway is amino-acid degradation; L-histidine degradation into L-glutamate; N-formimidoyl-L-glutamate from L-histidine: step 3/3. Its function is as follows. Catalyzes the hydrolytic cleavage of the carbon-nitrogen bond in imidazolone-5-propanoate to yield N-formimidoyl-L-glutamate. It is the third step in the universal histidine degradation pathway. In Salinispora tropica (strain ATCC BAA-916 / DSM 44818 / JCM 13857 / NBRC 105044 / CNB-440), this protein is Imidazolonepropionase.